A 200-amino-acid chain; its full sequence is MIGRMVGLEPSSRSGVLEECRECRAIVMKGDGVQTPLHKGDSILGGEGACLMRYAAWTLISAVDVVYCSLETRESVSLTFNPDGQVIVVPFMFKGYNIAALPTTKFGDLKKDTKQIENVVSFLRSDICYAVWEFLVSSVQYKDDDRFERLFDERMRGYLRNISEGTSKVYMRGNKTFSELLEMVCGRMLECSGRVAGGGA.

The protein belongs to the UPF0329 family.

The chain is UPF0329 protein ECU06_1670 from Encephalitozoon cuniculi (strain GB-M1) (Microsporidian parasite).